Here is a 294-residue protein sequence, read N- to C-terminus: Probable WRKY transcription factor 70 (294 aa).

Residues 72 to 94 (SQNASCDNDGKFEDSGDSRKRLG) form a disordered region. Residues 79–91 (NDGKFEDSGDSRK) are compositionally biased toward basic and acidic residues. A Nuclear localization signal motif is present at residues 90-97 (RKRLGPVK). The segment at residues 114-182 (IESTILEDAF…YIGNHTCNTN (69 aa)) is a DNA-binding region (WRKY). A disordered region spans residues 201 to 229 (SEDHKSPSLSTSMKEEDNPHRHHGSSTEN).

It belongs to the WRKY group III family. As to quaternary structure, interacts with WRKY30. Binds to BZR2/BES1 to cooperatively regulate the expression of target genes. Binds to unmodified (i.e. not sumoylated) NPR1. Post-translationally, phosphorylated and destabilized by ASK7/BIN2. As to expression, expressed in leaves and flowers.

It is found in the nucleus. Transcription factor involved in senescence, biotic and abiotic stress responses by modulating various phytohormones signaling pathways. Interacts specifically with the W box (5'-(T)TGAC[CT]-3'), a frequently occurring elicitor-responsive cis-acting element. Binds to the 5'-[CT]GACTTTT-3' motif in promoters of target genes to induce their expression. Binding to the W-box element of PR-1 promoter is mediated by not-sumoylated NPR1 in the absence of salicylic acid. Plays an important but not indispensable role in jasmonate and salicylic acid signaling. Positively regulates the salicylic acid (SA)-mediated signal pathway, but negatively the jasmonic acid (JA)-mediated signal pathway, thus determining the balance between these mutually antagonistic pathways. Together with WRKY46, WRKY53 and WRKY54, prevents defense response to the necrotrophic pathogens P.carotovorum and B.cinerea, but promotes defense responses (including SA-induced pathogenesis-related (PR) genes expression) against biotrophic/hemibiotrophic SA-monitored pathogens (e.g. P.syringae, E.carotovora subsp. carotovora SCC3193 and E.cichoracearum), probably by regulating negatively the JA/ET and positively the SA signaling pathways. Contributes to the suppression of jasmonic acid (MeJA)-induced expression of JA-responsive genes (e.g. PDF1.2). Promotes susceptibility to JA-monitored pathogens (e.g. A.brassicicola), probably by facilitating SA-controlled suppression of JA-mediated defense. Represses the biosynthesis of the phytoalexin camalexin and indol-3-ylmethyl glucosinolate (IGS). Represses both SA and JA/ethylene (ET) mediated defense marker genes expression. Negative regulator of SA biosynthesis. Negative regulator of EDS1-dependent defense against E.amylovora. Required for RPP4-mediated disease resistance and basal defense against H.parasitica, probably via late up-regulation (LURP) of resistance genes (e.g. CML10/CaBP22 and LURP1). Probably involved in defense responses toward insects (e.g. P.xylostella and B.brassicae). Together with WRKY54, negative regulator of developmental senescence, probably via the regulation of several senescence-associated markers genes. Together with WRKY46 and WRKY54, promotes brassinosteroid (BR)-regulated plant growth but prevent drought response by modulating gene expression. In collaboration with WRKY54, prevents stomatal closure and, consequently, osmotic stress tolerance. Regulates rhizobacterium B.cereus AR156-induced systemic resistance (ISR) to P.syringae pv. tomato DC3000. The chain is Probable WRKY transcription factor 70 from Arabidopsis thaliana (Mouse-ear cress).